The chain runs to 201 residues: Proteasome subunit beta type-2 (201 aa).

M1 is modified (N-acetylmethionine).

This sequence belongs to the peptidase T1B family. As to quaternary structure, the 26S proteasome consists of a 20S proteasome core and two 19S regulatory subunits. The 20S proteasome core is a barrel-shaped complex made of 28 subunits that are arranged in four stacked rings. The two outer rings are each formed by seven alpha subunits, and the two inner rings are formed by seven beta subunits. The proteolytic activity is exerted by three beta-subunits PSMB5, PSMB6 and PSMB7. In terms of assembly, (Microbial infection) Interacts with HIV-1 protein Tat.

The protein resides in the cytoplasm. Its subcellular location is the nucleus. Functionally, non-catalytic component of the 20S core proteasome complex involved in the proteolytic degradation of most intracellular proteins. This complex plays numerous essential roles within the cell by associating with different regulatory particles. Associated with two 19S regulatory particles, forms the 26S proteasome and thus participates in the ATP-dependent degradation of ubiquitinated proteins. The 26S proteasome plays a key role in the maintenance of protein homeostasis by removing misfolded or damaged proteins that could impair cellular functions, and by removing proteins whose functions are no longer required. Associated with the PA200 or PA28, the 20S proteasome mediates ubiquitin-independent protein degradation. This type of proteolysis is required in several pathways including spermatogenesis (20S-PA200 complex) or generation of a subset of MHC class I-presented antigenic peptides (20S-PA28 complex). The sequence is that of Proteasome subunit beta type-2 from Homo sapiens (Human).